We begin with the raw amino-acid sequence, 518 residues long: D-aminopeptidase (518 aa).

The Nucleophile role is filled by serine 62. The active-site Proton donor/acceptor is lysine 65. Residues glutamine 477–glutamate 487 form an important for specificity region. Residue aspartate 481 participates in substrate binding.

The protein belongs to the peptidase S12 family. In terms of assembly, homodimer.

It carries out the reaction Release of an N-terminal D-amino acid from a peptide, Xaa-|-Yaa-, in which Xaa is preferably D-Ala, D-Ser or D-Thr. D-amino acid amides and methyl esters also are hydrolyzed, as is glycine amide.. With respect to regulation, inhibited by beta-lactam compounds such as 6-aminopenicillic acid, 7-aminocephalosporanic acid, benzylpenicillin and ampicillin. Inhibited by p-chloromercuribenzoate. In terms of biological role, hydrolyzes N-terminal residues in D-amino acid-containing peptides. The sequence is that of D-aminopeptidase from Brucella ovis (strain ATCC 25840 / 63/290 / NCTC 10512).